The primary structure comprises 230 residues: Small ribosomal subunit protein uS3 (230 aa).

One can recognise a KH type-2 domain in the interval 39-107 (VRKFLEKKLE…PAQINIAEIR (69 aa)).

It belongs to the universal ribosomal protein uS3 family. In terms of assembly, part of the 30S ribosomal subunit. Forms a tight complex with proteins S10 and S14.

Binds the lower part of the 30S subunit head. Binds mRNA in the 70S ribosome, positioning it for translation. The polypeptide is Small ribosomal subunit protein uS3 (Shewanella amazonensis (strain ATCC BAA-1098 / SB2B)).